We begin with the raw amino-acid sequence, 218 residues long: uncharacterized protein (218 aa).

The protein belongs to the glycosyltransferase 2 family.

This is an uncharacterized protein from Mycobacterium bovis (strain ATCC BAA-935 / AF2122/97).